The sequence spans 169 residues: Crossover junction endodeoxyribonuclease RuvC (169 aa).

Catalysis depends on residues D11, E71, and D143. Positions 11, 71, and 143 each coordinate Mg(2+).

Belongs to the RuvC family. In terms of assembly, homodimer which binds Holliday junction (HJ) DNA. The HJ becomes 2-fold symmetrical on binding to RuvC with unstacked arms; it has a different conformation from HJ DNA in complex with RuvA. In the full resolvosome a probable DNA-RuvA(4)-RuvB(12)-RuvC(2) complex forms which resolves the HJ. Mg(2+) serves as cofactor.

The protein resides in the cytoplasm. It carries out the reaction Endonucleolytic cleavage at a junction such as a reciprocal single-stranded crossover between two homologous DNA duplexes (Holliday junction).. In terms of biological role, the RuvA-RuvB-RuvC complex processes Holliday junction (HJ) DNA during genetic recombination and DNA repair. Endonuclease that resolves HJ intermediates. Cleaves cruciform DNA by making single-stranded nicks across the HJ at symmetrical positions within the homologous arms, yielding a 5'-phosphate and a 3'-hydroxyl group; requires a central core of homology in the junction. The consensus cleavage sequence is 5'-(A/T)TT(C/G)-3'. Cleavage occurs on the 3'-side of the TT dinucleotide at the point of strand exchange. HJ branch migration catalyzed by RuvA-RuvB allows RuvC to scan DNA until it finds its consensus sequence, where it cleaves and resolves the cruciform DNA. This is Crossover junction endodeoxyribonuclease RuvC from Bartonella quintana (strain Toulouse) (Rochalimaea quintana).